The sequence spans 471 residues: Glutamate--tRNA ligase (471 aa).

A 'HIGH' region motif is present at residues P9–G19. Zn(2+)-binding residues include C98, C100, C125, and D127. The short motif at K237 to R241 is the 'KMSKS' region element. K240 contributes to the ATP binding site.

This sequence belongs to the class-I aminoacyl-tRNA synthetase family. Glutamate--tRNA ligase type 1 subfamily. In terms of assembly, monomer. The cofactor is Zn(2+).

It is found in the cytoplasm. The catalysed reaction is tRNA(Glu) + L-glutamate + ATP = L-glutamyl-tRNA(Glu) + AMP + diphosphate. Its function is as follows. Catalyzes the attachment of glutamate to tRNA(Glu) in a two-step reaction: glutamate is first activated by ATP to form Glu-AMP and then transferred to the acceptor end of tRNA(Glu). This Yersinia pseudotuberculosis serotype IB (strain PB1/+) protein is Glutamate--tRNA ligase.